The sequence spans 196 residues: Large ribosomal subunit protein bL9 (196 aa).

It belongs to the bacterial ribosomal protein bL9 family.

Functionally, binds to the 23S rRNA. The sequence is that of Large ribosomal subunit protein bL9 from Gluconobacter oxydans (strain 621H) (Gluconobacter suboxydans).